Reading from the N-terminus, the 508-residue chain is Protein O-glucosyltransferase 3 (508 aa).

An N-terminal signal peptide occupies residues Met-1–Gly-24. The stretch at Ala-25–Gly-134 is one Filamin repeat. Asn-307 carries an N-linked (GlcNAc...) asparagine glycan. The disordered stretch occupies residues Arg-480–Leu-508. The Prevents secretion from ER motif lies at Arg-505 to Leu-508.

It belongs to the KDELC family.

It localises to the endoplasmic reticulum lumen. The enzyme catalyses L-seryl-[EGF-like domain protein] + UDP-alpha-D-glucose = 3-O-(beta-D-glucosyl)-L-seryl-[EGF-like domain protein] + UDP + H(+). It catalyses the reaction L-seryl-[EGF-like domain protein] + UDP-alpha-D-xylose = 3-O-(beta-D-xylosyl)-L-seryl-[EGF-like domain protein] + UDP + H(+). The protein operates within protein modification; protein glycosylation. Its function is as follows. Protein glucosyltransferase that catalyzes the transfer of glucose from UDP-glucose to a serine residue within the consensus sequence peptide C-X-N-T-X-G-S-F-X-C. Can also catalyze the transfer of xylose from UDP-xylose but less efficiently. Specifically targets extracellular EGF repeats of proteins such as NOTCH1, NOTCH3, FBN1, FBN2 and LTBP1. May regulate the transport of NOTCH1 and NOTCH3 to the plasma membrane and thereby the Notch signaling pathway. The sequence is that of Protein O-glucosyltransferase 3 (Poglut3) from Rattus norvegicus (Rat).